The primary structure comprises 176 residues: Nascent polypeptide-associated complex subunit alpha (176 aa).

An NAC-A/B domain is found at 14-78 (SKNEKKAREL…AKVDDFTQRL (65 aa)). A disordered region spans residues 85 to 127 (LQQNEGVLPAGQDAVSKDPQSIQADMQAAADSATDKPSADDAV). Positions 137–176 (LNADDIELVMQQAGVPRAKAAKALKEHDSDIVNAIMALSG) constitute a UBA domain.

This sequence belongs to the NAC-alpha family. As to quaternary structure, part of the nascent polypeptide-associated complex (NAC), consisting of EGD2 and EGD1. NAC associates with ribosomes via EGD1.

The protein resides in the cytoplasm. It is found in the nucleus. In terms of biological role, component of the nascent polypeptide-associated complex (NAC), a dynamic component of the ribosomal exit tunnel, protecting the emerging polypeptides from interaction with other cytoplasmic proteins to ensure appropriate nascent protein targeting. The NAC complex also promotes mitochondrial protein import by enhancing productive ribosome interactions with the outer mitochondrial membrane and blocks the inappropriate interaction of ribosomes translating non-secretory nascent polypeptides with translocation sites in the membrane of the endoplasmic reticulum. EGD2 may also be involved in transcription regulation. In Kluyveromyces lactis (strain ATCC 8585 / CBS 2359 / DSM 70799 / NBRC 1267 / NRRL Y-1140 / WM37) (Yeast), this protein is Nascent polypeptide-associated complex subunit alpha (EGD2).